The primary structure comprises 399 residues: Enoyl-[acyl-carrier-protein] reductase [NADH] (399 aa).

NAD(+) contacts are provided by residues 48–53, 74–75, 111–112, and 139–140; these read GASTGY, FE, DA, and LA. Tyr-225 lines the substrate pocket. Tyr-235 acts as the Proton donor in catalysis. NAD(+)-binding positions include Lys-244 and 274–276; that span reads VVT.

It belongs to the TER reductase family. As to quaternary structure, monomer.

It catalyses the reaction a 2,3-saturated acyl-[ACP] + NAD(+) = a (2E)-enoyl-[ACP] + NADH + H(+). It functions in the pathway lipid metabolism; fatty acid biosynthesis. Involved in the final reduction of the elongation cycle of fatty acid synthesis (FAS II). Catalyzes the reduction of a carbon-carbon double bond in an enoyl moiety that is covalently linked to an acyl carrier protein (ACP). The sequence is that of Enoyl-[acyl-carrier-protein] reductase [NADH] from Yersinia pseudotuberculosis serotype O:1b (strain IP 31758).